The chain runs to 279 residues: VDEEDDIVYFQAGTLDAGEATAQKAEGKKKEGEVSSGKAVVVKDKDVDLGTAGTHSVPRLKSMTSKLTLPMLKGKSRCNLDHLLSYKQTVDLSNARATHEQFQNWYDGVMASYELEESSMEIILNGFMVWCIENGTSPDINGVWTMMDDEEQISYPLKPMLDHAKPSLRQIMRHFSALAEAYIEMRSREKPYMPRYGLQRNLRDQSLARYAFDFYEITATTPVRAKEAHLQMKAAALKNSNTNMFGLDGNVTTSEEDTERHTATDVNRNMHHLLGVKGV.

The protein belongs to the potyviridae genome polyprotein family. In terms of processing, genome polyprotein of potyviruses undergoes post-translational proteolytic processing by the main proteinase NIa-pro resulting in the production of at least ten individual proteins. The P1 proteinase and the HC-pro cleave only their respective C-termini autocatalytically. 6K1 is essential for proper proteolytic separation of P3 from CI.

It localises to the virion. The enzyme catalyses RNA(n) + a ribonucleoside 5'-triphosphate = RNA(n+1) + diphosphate. An RNA-dependent RNA polymerase that plays an essential role in the virus replication. In terms of biological role, involved in aphid transmission, cell-to-cell and systemis movement, encapsidation of the viral RNA and in the regulation of viral RNA amplification. This Solanum betaceum (Tamarillo) protein is Genome polyprotein.